The sequence spans 208 residues: Uracil phosphoribosyltransferase (208 aa).

5-phospho-alpha-D-ribose 1-diphosphate contacts are provided by residues Arg-78, Arg-103, and 130 to 138 (DPMLATGGS). Uracil contacts are provided by residues Ile-193 and 198 to 200 (GDA). Asp-199 is a binding site for 5-phospho-alpha-D-ribose 1-diphosphate.

Belongs to the UPRTase family. It depends on Mg(2+) as a cofactor.

The catalysed reaction is UMP + diphosphate = 5-phospho-alpha-D-ribose 1-diphosphate + uracil. The protein operates within pyrimidine metabolism; UMP biosynthesis via salvage pathway; UMP from uracil: step 1/1. Allosterically activated by GTP. Catalyzes the conversion of uracil and 5-phospho-alpha-D-ribose 1-diphosphate (PRPP) to UMP and diphosphate. In Neisseria gonorrhoeae (strain ATCC 700825 / FA 1090), this protein is Uracil phosphoribosyltransferase.